A 275-amino-acid polypeptide reads, in one-letter code: Putative ABC transporter permease protein ORF2 (275 aa).

Transmembrane regions (helical) follow at residues 11-31, 74-94, 108-128, 136-156, 185-205, and 239-259; these read YFIF…FMLF, IAVS…AFAF, LIIA…YVLT, TVFA…IFIL, ILLP…GTYL, and IPAI…AYIF. The 192-residue stretch at 69-260 folds into the ABC transmembrane type-1 domain; the sequence is LKNSVIAVSI…LPMLIAYIFG (192 aa).

It belongs to the binding-protein-dependent transport system permease family. MalFG subfamily.

The protein resides in the cell membrane. In Caldicellulosiruptor sp. (strain Rt8B.4), this protein is Putative ABC transporter permease protein ORF2.